The sequence spans 357 residues: uncharacterized protein (357 aa).

A disordered region spans residues Ser-120–Pro-145.

This is an uncharacterized protein from Caenorhabditis elegans.